Reading from the N-terminus, the 337-residue chain is GTP 3',8-cyclase (337 aa).

The 227-residue stretch at 17-243 folds into the Radical SAM core domain; sequence PFQRQYYYLR…HKSHTDGPAK (227 aa). A GTP-binding site is contributed by Arg26. Residues Cys33 and Cys37 each contribute to the [4Fe-4S] cluster site. Tyr39 lines the S-adenosyl-L-methionine pocket. [4Fe-4S] cluster is bound at residue Cys40. Arg76 serves as a coordination point for GTP. S-adenosyl-L-methionine is bound at residue Gly80. GTP is bound at residue Thr107. S-adenosyl-L-methionine is bound at residue Ser131. Residue Lys168 coordinates GTP. An S-adenosyl-L-methionine-binding site is contributed by Met202. 2 residues coordinate [4Fe-4S] cluster: Cys265 and Cys268. 270–272 serves as a coordination point for GTP; the sequence is RLR. Cys282 is a [4Fe-4S] cluster binding site.

The protein belongs to the radical SAM superfamily. MoaA family. As to quaternary structure, monomer and homodimer. Requires [4Fe-4S] cluster as cofactor.

It catalyses the reaction GTP + AH2 + S-adenosyl-L-methionine = (8S)-3',8-cyclo-7,8-dihydroguanosine 5'-triphosphate + 5'-deoxyadenosine + L-methionine + A + H(+). It participates in cofactor biosynthesis; molybdopterin biosynthesis. Functionally, catalyzes the cyclization of GTP to (8S)-3',8-cyclo-7,8-dihydroguanosine 5'-triphosphate. The polypeptide is GTP 3',8-cyclase (Haemophilus influenzae (strain PittGG)).